A 296-amino-acid chain; its full sequence is GTPase Era (296 aa).

The Era-type G domain occupies 3-170 (KSGFVTIVGR…KELMFKYIPE (168 aa)). The tract at residues 11–18 (GRPNVGKS) is G1. Residue 11–18 (GRPNVGKS) coordinates GTP. A G2 region spans residues 37–41 (QTTRN). The G3 stretch occupies residues 58–61 (DTPG). Residues 58–62 (DTPGI) and 120–123 (NKID) contribute to the GTP site. A G4 region spans residues 120-123 (NKID). The segment at 149–151 (ISA) is G5. The KH type-2 domain occupies 201–278 (LSEEVPHGIA…YIRLWVKVKE (78 aa)).

Belongs to the TRAFAC class TrmE-Era-EngA-EngB-Septin-like GTPase superfamily. Era GTPase family. Monomer.

The protein localises to the cytoplasm. It localises to the cell membrane. Its function is as follows. An essential GTPase that binds both GDP and GTP, with rapid nucleotide exchange. Plays a role in 16S rRNA processing and 30S ribosomal subunit biogenesis and possibly also in cell cycle regulation and energy metabolism. This Clostridium botulinum (strain ATCC 19397 / Type A) protein is GTPase Era.